A 298-amino-acid chain; its full sequence is 3'-5' exonuclease crn-4 (298 aa).

One can recognise an Exonuclease domain in the interval L12–L192. The Mg(2+) site is built by D15, E17, and D184. 4 residues coordinate Zn(2+): C210, C260, C263, and C270.

Homodimer (via C-terminus). Interacts with crn-5; interaction promotes the DNase activity of crn-4. Interacts with cps-6, crn-1 and cyn-13. Mg(2+) is required as a cofactor.

With respect to regulation, exonuclease activity is inhibited in vitro by pontacyl violet 6R (PV6R), p-chloromercuriphenyl sulfonate (PCMPS), 5,5'-dithiobis(2-nitrobenzoic acid) (DTNB), aurintricarboxylic acid (ATA), 2-morpholin-4-ylethanesulfonate (MES), 4-[(4,6-dichloro-1,3,5-triazin-2-yl)amino]-2-(3-hydroxy-6-oxoxanthen-9-yl)benzoic acid (DR396) and fmoc-d-Cha-OH (FDCO). Interaction with ssRNA is reduced in vitro by PV6R. Its function is as follows. Possesses 3'-&gt;5' exoribonuclease activity in digestion of DNA and RNA. Cleaves nucleic acid substrates with efficiencies in the following order: single-stranded RNA (ssRNA) &gt; double-stranded DNA (dsDNA) &gt; single-stranded DNA (ssDNA). Involved in apoptotic DNA degradation. The protein is 3'-5' exonuclease crn-4 (crn-4) of Caenorhabditis elegans.